The primary structure comprises 272 residues: Alkaline ceramidase (272 aa).

2 helical membrane-spanning segments follow: residues 34 to 54 and 61 to 81; these read FANT…IMLL and VNGG…ASTY. His83 contributes to the Zn(2+) binding site. 4 helical membrane passes run 96–116, 124–144, 148–168, and 183–203; these read LSLV…MKWF, LTVV…LCFL, LNAI…RYEG, and ILAL…LCDF. Zn(2+) is bound by residues His213 and His217. The helical transmembrane segment at 214 to 234 threads the bilayer; the sequence is ALFHLLAGLAGYTIFIMFSMI. Asn256 carries an N-linked (GlcNAc...) asparagine glycan.

This sequence belongs to the alkaline ceramidase family. Zn(2+) serves as cofactor.

The protein localises to the membrane. It carries out the reaction an N-acylsphing-4-enine + H2O = sphing-4-enine + a fatty acid. In terms of biological role, hydrolyzes the sphingolipid ceramide into sphingosine and free fatty acid. This is Alkaline ceramidase from Caenorhabditis briggsae.